The sequence spans 142 residues: Transcriptional regulator MraZ (142 aa).

2 SpoVT-AbrB domains span residues 5-51 (ASAL…PRPE) and 77-120 (AMDV…DSQT).

Belongs to the MraZ family. As to quaternary structure, forms oligomers.

It localises to the cytoplasm. It is found in the nucleoid. The protein is Transcriptional regulator MraZ of Burkholderia cenocepacia (strain HI2424).